The chain runs to 585 residues: Switch-associated protein 70 (585 aa).

The 97-residue stretch at 210-306 (DVLKQGYMIK…WIQAIHSTIH (97 aa)) folds into the PH domain. Residues 316 to 532 (HKEARQRRKE…KLEMAAKMTK (217 aa)) adopt a coiled-coil conformation.

In terms of assembly, the SWAP complex consists of NPM1, NCL, PARP1 and SWAP70. Tyrosine-phosphorylated.

The protein resides in the cytoplasm. Its subcellular location is the cell membrane. The protein localises to the nucleus. It is found in the cell projection. It localises to the lamellipodium. In terms of biological role, phosphatidylinositol 3,4,5-trisphosphate-dependent guanine nucleotide exchange factor (GEF) which, independently of RAS, transduces signals from tyrosine kinase receptors to RAC. It also mediates signaling of membrane ruffling. Regulates the actin cytoskeleton as an effector or adapter protein in response to agonist stimulated phosphatidylinositol (3,4)-bisphosphate production and cell protrusion. The polypeptide is Switch-associated protein 70 (SWAP70) (Bos taurus (Bovine)).